The following is a 435-amino-acid chain: Membrane-bound ghrelin O-acyltransferase MBOAT4 (435 aa).

Residues 1–5 (MDWLQ) are Lumenal-facing. Residues 6 to 26 (LFFLHPLSFYQGAAFPFALLF) form a helical membrane-spanning segment. Over 27 to 40 (NYLCILDTFSTRAR) the chain is Cytoplasmic. The chain crosses the membrane as a helical span at residues 41 to 56 (YLFLLAGGGVLAFAAM). Residues 57 to 59 (GPY) lie on the Lumenal side of the membrane. The chain crosses the membrane as a helical span at residues 60–76 (SLLIFIPALCAVALVSF). At 77–82 (LSPQEV) the chain is on the cytoplasmic side. A helical membrane pass occupies residues 83–101 (HRLTFFFQMGWQTLCHLGL). Topologically, residues 102–120 (HYTEYYLGEPPPVRFYITL) are lumenal. Residues 121-136 (SSLMLLTQRVTSLSLD) form a helical membrane-spanning segment. Over 137–206 (ICEGKVEAPR…YPSISFRALT (70 aa)) the chain is Cytoplasmic. Residues 207-227 (WRGLQILGLECLKVALRSAVS) traverse the membrane as a helical segment. At 228–240 (AGAGLDDCQRLEC) the chain is on the lumenal side. Residues 241-261 (IYLMWSTAWLFKLTYYSHWIL) form a helical membrane-spanning segment. Over 262 to 324 (DDSLLHAAGF…RRLVFRKSRR (63 aa)) the chain is Cytoplasmic. Active-site residues include Asn-307 and His-338. Residues 325 to 338 (WPLLQTFAFSAWWH) traverse the membrane as a helical segment. Over 339 to 340 (GL) the chain is Lumenal. A helical membrane pass occupies residues 341 to 357 (HPGQVFGFLCWSVMVKA). Over 358 to 376 (DYLIHTFANVCIRSWPLRL) the chain is Cytoplasmic. A helical transmembrane segment spans residues 377-397 (LYRALTWAHTQLIIAYIMLAV). At 398-407 (EGRSLSSLCQ) the chain is on the lumenal side. The helical transmembrane segment at 408–428 (LCCSYNSLFPVMYGLLLFLLA) threads the bilayer. Topologically, residues 429-435 (ERKDKRN) are cytoplasmic.

It belongs to the membrane-bound acyltransferase family. As to quaternary structure, monomer. Post-translationally, not glycosylated. In terms of tissue distribution, highly expressed in stomach and pancreas. Lower expression in small intestine and colon. Very low expression in testis.

The protein localises to the endoplasmic reticulum membrane. The enzyme catalyses octanoyl-CoA + L-seryl-[protein] = O-octanoyl-L-seryl-[protein] + CoA. The catalysed reaction is hexanoyl-CoA + L-seryl-[protein] = O-hexanoyl-L-seryl-[protein] + CoA. It carries out the reaction decanoyl-CoA + L-seryl-[protein] = O-decanoyl-L-seryl-[protein] + CoA. It catalyses the reaction L-seryl-[protein] + acetyl-CoA = O-acetyl-L-seryl-[protein] + CoA. The enzyme catalyses L-seryl-[protein] + butanoyl-CoA = O-butanoyl-L-seryl-[protein] + CoA. The catalysed reaction is pentanoyl-CoA + L-seryl-[protein] = O-pentanoyl-L-seryl-[protein] + CoA. It carries out the reaction heptanoyl-CoA + L-seryl-[protein] = O-heptanoyl-L-seryl-[protein] + CoA. It catalyses the reaction nonanoyl-CoA + L-seryl-[protein] = O-nonanoyl-L-seryl-[protein] + CoA. The enzyme catalyses L-seryl-[protein] + dodecanoyl-CoA = O-dodecanoyl-L-seryl-[protein] + CoA. The catalysed reaction is L-seryl-[protein] + tetradecanoyl-CoA = O-tetradecanoyl-L-seryl-[protein] + CoA. It carries out the reaction a fatty acyl-CoA + L-seryl-[protein] = O-fatty acyl-L-seryl-[protein] + CoA. With respect to regulation, inhibited by 1-[2-cyano-3,12-dioxooleana-1,9(11)- dien-28-oyl]ethylamide (CDDO-EA) with an IC(50) of 60 uM. Inhibited by Fe3+ and Cu2+ and the O-acyltransferase activity is completely blocked over 5 mM Fe3+ and 0.5 mM Cu2+. In terms of biological role, catalyzes ghrelin acylation at 'Ser-3' using preferentially octanoyl-CoA, hexanoyl-CoA and decanoyl-CoA as acyl-CoA donors leading to ghrelin activity. In vitro also uses acyl-CoA donors of different lengths from short-chain (C2) to long-chain fatty acids (C16) knowing that acyl-CoA donors from butanoyl-CoA (C4) to dodecanoyl-CoA (C12) are more efficient compared to longer acyl-CoA donors, such as myristoyl-CoA (C14) and palmitoyl-CoA (C16) that are not efficient. Inactive octanoyltransferase activity. The protein is Membrane-bound ghrelin O-acyltransferase MBOAT4 of Mus musculus (Mouse).